A 555-amino-acid polypeptide reads, in one-letter code: CTP synthase (555 aa).

The tract at residues 1–271 (MVKRGKKTKY…DDKLAELFNI (271 aa)) is amidoligase domain. Ser-19 serves as a coordination point for CTP. Position 19 (Ser-19) interacts with UTP. Residues 20–25 (SLGKGL) and Asp-77 each bind ATP. Mg(2+)-binding residues include Asp-77 and Glu-145. Residues 152–154 (DIE), 192–197 (KTKPTQ), and Lys-228 each bind CTP. UTP-binding positions include 192–197 (KTKPTQ) and Lys-228. A Glutamine amidotransferase type-1 domain is found at 297 to 537 (RIGIVGKYVE…VKAALEHRDA (241 aa)). An L-glutamine-binding site is contributed by Gly-358. Residue Cys-385 is the Nucleophile; for glutamine hydrolysis of the active site. L-glutamine is bound by residues 386–389 (LGLQ), Glu-409, and Arg-466. Active-site residues include His-510 and Glu-512. Residues 535 to 555 (RDAQQRQPPAEVKKLAVGKNG) form a disordered region.

This sequence belongs to the CTP synthase family. As to quaternary structure, homotetramer.

It carries out the reaction UTP + L-glutamine + ATP + H2O = CTP + L-glutamate + ADP + phosphate + 2 H(+). The enzyme catalyses L-glutamine + H2O = L-glutamate + NH4(+). It catalyses the reaction UTP + NH4(+) + ATP = CTP + ADP + phosphate + 2 H(+). It functions in the pathway pyrimidine metabolism; CTP biosynthesis via de novo pathway; CTP from UDP: step 2/2. Allosterically activated by GTP, when glutamine is the substrate; GTP has no effect on the reaction when ammonia is the substrate. The allosteric effector GTP functions by stabilizing the protein conformation that binds the tetrahedral intermediate(s) formed during glutamine hydrolysis. Inhibited by the product CTP, via allosteric rather than competitive inhibition. Its function is as follows. Catalyzes the ATP-dependent amination of UTP to CTP with either L-glutamine or ammonia as the source of nitrogen. Regulates intracellular CTP levels through interactions with the four ribonucleotide triphosphates. The sequence is that of CTP synthase from Anaeromyxobacter sp. (strain K).